The following is a 248-amino-acid chain: MIIAQNKTNYQDLLKTLAVIAMTIDHIGLYLYPELTIMRIIGRIAMPVFCFFAGYNFYDKPKTRIIIYGVILQIYTTILFKQFLTTNILISIYLGQCYIYYFRNSITSFFYNGFCHVAVMIILWYISWTLIDYGTLVIAIMILGFIAQHEKTNLKLCCFIAIFTSIVHSTFFTLLIPLSDFNFSNTDLILNLTFLTITYILMILSDYSQKILINIKWISRNVIYIYCIQIIILQFIFIYKYTYGFKNW.

Helical transmembrane passes span 65–85 (IIIY…QFLT), 105–125 (SITS…ILWY), 126–146 (ISWT…LGFI), 156–176 (LCCF…TLLI), 188–208 (LILN…SDYS), and 222–242 (VIYI…YKYT).

The protein resides in the cell membrane. This is an uncharacterized protein from Rickettsia prowazekii (strain Madrid E).